The sequence spans 315 residues: DDRGK domain-containing protein 1 (315 aa).

A helical transmembrane segment spans residues M1–A28. The interval M1–T115 is mediates interaction with CDK5RAP3. Residues A29 to A315 lie on the Cytoplasmic side of the membrane. The segment at A30–R184 is disordered. Residues E34–A43 are compositionally biased toward basic and acidic residues. Phosphoserine is present on S73. Residues G119 to L217 form a mediates interaction with TRIP4 region. Residues K125–R184 show a composition bias toward basic and acidic residues. Positions A196–E210 match the UFM1-interacting motif (UFIM) motif. The interval L217 to A315 is mediates interaction with UFL1. Residues V230–P274 enclose the PCI domain. A Glycyl lysine isopeptide (Lys-Gly) (interchain with G-Cter in UFM1) cross-link involves residue K268.

The protein belongs to the DDRGK1 family. Component of the UFM1 ribosome E3 ligase (UREL) complex, composed of UFL1, DDRGK1 and CDK5RAP3. Interacts with (unphosphorylated) ERN1/IRE1-alpha; interaction is dependent on UFM1 and takes place in response to endoplasmic reticulum stress, regulating ERN1/IRE1-alpha stability. Interacts with NFKBIA. Interacts with SOX9. Ufmylated; conjugated to ubiquitin-like protein UFM1, probably at Lys-268 by UFL1. The relevance of ufmylation is however unclear: as DDRGK1 acts as a substrate adapter for ufmylation, it is uncertain whether ufmylation is a collateral effect of the ufmylation process or whether it is required to regulate its activity. In terms of processing, ubiquitinated. Ubiquitination probably triggers proteasomal degradation and is negatively regulated by UFL1, the enzyme involved in the ufmylation of DDRGK1. Ubiquitously expressed. Higher expression in pancreatic islets, pancreatic acini and testis (at protein level). Highly expressed in the intestinal exocrine cells.

Its subcellular location is the endoplasmic reticulum membrane. Its function is as follows. Component of the UFM1 ribosome E3 ligase (UREL) complex, a multiprotein complex that catalyzes ufmylation of endoplasmic reticulum-docked proteins. The UREL complex plays a key role in ribosome recycling by mediating mono-ufmylation of the RPL26/uL24 subunit of the 60S ribosome following ribosome dissociation: ufmylation weakens the junction between post-termination 60S subunits and SEC61 translocons, promoting release and recycling of the large ribosomal subunit from the endoplasmic reticulum membrane. Ufmylation of RPL26/uL24 and subsequent 60S ribosome recycling either take place after normal termination of translation or after ribosome stalling during cotranslational translocation at the endoplasmic reticulum. Within the UREL complex, DDRGK1 tethers the complex to the endoplasmic reticulum membrane to restrict its activity to endoplasmic reticulum-docked ribosomes and acts as an ufmylation 'reader': following RPL26/uL24 ufmylation, DDRGK1 specifically binds to ufmylated RPL26/uL24 via its UFIM motif, resulting in stable association between the 60S ribosome and the UREL complex, followed by dissociation of the 60S ribosome subunit from the endoplasmic reticulum membrane. The UREL complex is also involved in reticulophagy in response to endoplasmic reticulum stress by promoting ufmylation of proteins such as CYB5R3 and RPN1, thereby promoting lysosomal degradation of ufmylated proteins. Ufmylation-dependent reticulophagy inhibits the unfolded protein response (UPR) by regulating ERN1/IRE1-alpha stability. Acts as a regulator of immunity by promoting differentiation of B-cells into plasma cells: acts by promoting expansion of the endoplasmic reticulum and regulating the unfolded protein response (UPR). May also be required for TRIP4 ufmylation. May play a role in NF-kappa-B-mediated transcription through regulation of the phosphorylation and the degradation of NFKBIA, the inhibitor of NF-kappa-B. Plays a role in cartilage development through SOX9, inhibiting the ubiquitin-mediated proteasomal degradation of this transcriptional regulator. Required for stabilization and ufmylation of ATG9A. This Mus musculus (Mouse) protein is DDRGK domain-containing protein 1.